The following is an 87-amino-acid chain: Large ribosomal subunit protein eL31 (87 aa).

The protein belongs to the eukaryotic ribosomal protein eL31 family.

The protein is Large ribosomal subunit protein eL31 of Methanocorpusculum labreanum (strain ATCC 43576 / DSM 4855 / Z).